An 80-amino-acid polypeptide reads, in one-letter code: Serine protease inhibitor Kazal-type 6 (80 aa).

A signal peptide spans 1–23 (MKTSGVFLLLSLALFCFFSGVFG). Position 24 is a pyrrolidone carboxylic acid (Q24). The region spanning 24–80 (QGAQVDCAEFKDPKVYCTRESNPHCGSDGQTYGNKCAFCKAVMKSGGKINLKHRGKC) is the Kazal-like domain. Cystine bridges form between C30/C62, C40/C59, and C48/C80.

Seminal plasma.

Its subcellular location is the secreted. Functionally, serine protease inhibitor selective for kallikreins. Efficiently inhibits KLK4, KLK5, KLK6, KLK7, KLK12, KLK13 and KLK14. Doesn't inhibit KLK8. Inhibits acrosin, trypsin, and chymotrypsin. This Bos taurus (Bovine) protein is Serine protease inhibitor Kazal-type 6 (SPINK6).